Reading from the N-terminus, the 114-residue chain is Large ribosomal subunit protein P2 (114 aa).

Gly residues predominate over residues 74–83 (AAAAGGGGGD). Residues 74–114 (AAAAGGGGGDAPAAAAEEPKKEEKSEEESDEELGFSLFDDN) form a disordered region. Residues 98-114 (SEEESDEELGFSLFDDN) show a composition bias toward acidic residues.

This sequence belongs to the eukaryotic ribosomal protein P1/P2 family. P1 and P2 exist as dimers at the large ribosomal subunit. Phosphorylated.

Functionally, plays an important role in the elongation step of protein synthesis. In Parthenium argentatum (Guayule rubber plant), this protein is Large ribosomal subunit protein P2.